Reading from the N-terminus, the 286-residue chain is Meteorin-like protein (286 aa).

Residues 1–21 (MLSPFLAYLLSVVLLCRIARS) form the signal peptide. 5 disulfide bridges follow: Cys-28/Cys-51, Cys-84/Cys-120, Cys-165/Cys-235, Cys-168/Cys-259, and Cys-178/Cys-281.

Belongs to the meteorin family.

The protein localises to the secreted. Its function is as follows. Hormone induced following exercise or cold exposure that promotes energy expenditure. Induced either in the skeletal muscle after exercise or in adipose tissue following cold exposure and is present in the circulation. Able to stimulate energy expenditure associated with the browning of the white fat depots and improves glucose tolerance. The chain is Meteorin-like protein (metrnl) from Danio rerio (Zebrafish).